A 20-amino-acid chain; its full sequence is Cytochrome c oxidase subunit 7B-liver, mitochondrial (20 aa).

This sequence belongs to the cytochrome c oxidase VIIb family. As to quaternary structure, component of the cytochrome c oxidase (complex IV, CIV), a multisubunit enzyme composed of 14 subunits. The complex is composed of a catalytic core of 3 subunits MT-CO1, MT-CO2 and MT-CO3, encoded in the mitochondrial DNA, and 11 supernumerary subunits COX4I, COX5A, COX5B, COX6A, COX6B, COX6C, COX7A, COX7B, COX7C, COX8 and NDUFA4, which are encoded in the nuclear genome. The complex exists as a monomer or a dimer and forms supercomplexes (SCs) in the inner mitochondrial membrane with NADH-ubiquinone oxidoreductase (complex I, CI) and ubiquinol-cytochrome c oxidoreductase (cytochrome b-c1 complex, complex III, CIII), resulting in different assemblies (supercomplex SCI(1)III(2)IV(1) and megacomplex MCI(2)III(2)IV(2)).

Its subcellular location is the mitochondrion inner membrane. The catalysed reaction is 4 Fe(II)-[cytochrome c] + O2 + 8 H(+)(in) = 4 Fe(III)-[cytochrome c] + 2 H2O + 4 H(+)(out). It functions in the pathway energy metabolism; oxidative phosphorylation. Functionally, component of the cytochrome c oxidase, the last enzyme in the mitochondrial electron transport chain which drives oxidative phosphorylation. The respiratory chain contains 3 multisubunit complexes succinate dehydrogenase (complex II, CII), ubiquinol-cytochrome c oxidoreductase (cytochrome b-c1 complex, complex III, CIII) and cytochrome c oxidase (complex IV, CIV), that cooperate to transfer electrons derived from NADH and succinate to molecular oxygen, creating an electrochemical gradient over the inner membrane that drives transmembrane transport and the ATP synthase. Cytochrome c oxidase is the component of the respiratory chain that catalyzes the reduction of oxygen to water. Electrons originating from reduced cytochrome c in the intermembrane space (IMS) are transferred via the dinuclear copper A center (CU(A)) of subunit 2 and heme A of subunit 1 to the active site in subunit 1, a binuclear center (BNC) formed by heme A3 and copper B (CU(B)). The BNC reduces molecular oxygen to 2 water molecules using 4 electrons from cytochrome c in the IMS and 4 protons from the mitochondrial matrix. The chain is Cytochrome c oxidase subunit 7B-liver, mitochondrial from Thunnus obesus (Bigeye tuna).